A 602-amino-acid chain; its full sequence is Glutamine--fructose-6-phosphate aminotransferase [isomerizing] (602 aa).

Cys2 functions as the Nucleophile; for GATase activity in the catalytic mechanism. In terms of domain architecture, Glutamine amidotransferase type-2 spans 2–222 (CGIFGIIFAE…DGEYGYITAG (221 aa)). 2 consecutive SIS domains span residues 284 to 422 (VANA…ALGH) and 452 to 592 (LAKR…PDKP). Lys597 serves as the catalytic For Fru-6P isomerization activity.

In terms of assembly, homodimer.

Its subcellular location is the cytoplasm. It catalyses the reaction D-fructose 6-phosphate + L-glutamine = D-glucosamine 6-phosphate + L-glutamate. In terms of biological role, catalyzes the first step in hexosamine metabolism, converting fructose-6P into glucosamine-6P using glutamine as a nitrogen source. The sequence is that of Glutamine--fructose-6-phosphate aminotransferase [isomerizing] from Pyrobaculum aerophilum (strain ATCC 51768 / DSM 7523 / JCM 9630 / CIP 104966 / NBRC 100827 / IM2).